The sequence spans 162 residues: Zinc finger protein ZAT12 (162 aa).

2 consecutive C2H2-type zinc fingers follow at residues 39-61 (FTCKTCLKQFHSFQALGGHRASH) and 82-104 (HPCPICGVEFPMGQALGGHMRRH).

In terms of tissue distribution, expressed in roots, stems and flowers.

The protein resides in the nucleus. In terms of biological role, transcriptional repressor involved in light acclimation, cold and oxidative stress responses. May regulate a collection of transcripts involved in response to high-light, cold and oxidative stress. The polypeptide is Zinc finger protein ZAT12 (ZAT12) (Arabidopsis thaliana (Mouse-ear cress)).